A 271-amino-acid polypeptide reads, in one-letter code: Aquaporin-2 (271 aa).

At 1-11 the chain is on the cytoplasmic side; that stretch reads MWELRSIAFSR. The chain crosses the membrane as a helical span at residues 12–32; it reads AVLAEFLATLLFVFFGLGSAL. Residues 33–40 lie on the Extracellular side of the membrane; sequence NWPQALPS. A helical membrane pass occupies residues 41-59; that stretch reads VLQIAMAFGLAIGTLVQAL. Residues 60 to 64 lie on the Cytoplasmic side of the membrane; that stretch reads GHVSG. The discontinuously helical intramembrane region spans 65-74; sequence AHINPAVTVA. The NPA 1 motif lies at 68-70; the sequence is NPA. At 75–85 the chain is on the cytoplasmic side; sequence CLVGCHVSFLR. A helical membrane pass occupies residues 86-107; that stretch reads AVFYVAAQLLGAVAGAALLHEI. The Extracellular portion of the chain corresponds to 108–127; it reads TPPAIRGDLAVNALNNNSTA. Residues asparagine 123 and asparagine 124 are each glycosylated (N-linked (GlcNAc...) asparagine). The chain crosses the membrane as a helical span at residues 128–148; sequence GQAVTVELFLTLQLVLCIFPS. Residues 149–156 lie on the Cytoplasmic side of the membrane; the sequence is TDKRRGKQ. Residues 157 to 176 form a helical membrane-spanning segment; the sequence is LGHPALSIGFSVALGHLLGI. Topologically, residues 177–180 are extracellular; sequence HYTG. Residues 181 to 193 constitute an intramembrane region (discontinuously helical); the sequence is CSMNPARSLAPAI. The short motif at 184-186 is the NPA 2 element; it reads NPA. The Extracellular segment spans residues 194 to 201; sequence VTGKFDDH. A helical membrane pass occupies residues 202-222; sequence WVFWIGPLVGAIVASLLYNYV. At 223–271 the chain is on the cytoplasmic side; that stretch reads LFPPAKSLSERLAVLKGLEPDTDWEEREVRRRQSVELHSPQSLPRGTKA. Residues 249-271 form a disordered region; the sequence is REVRRRQSVELHSPQSLPRGTKA. Serine 256 bears the Phosphoserine mark. Positions 261–271 are enriched in polar residues; the sequence is SPQSLPRGTKA.

Belongs to the MIP/aquaporin (TC 1.A.8) family. As to quaternary structure, homotetramer. In terms of processing, ser-256 phosphorylation is necessary and sufficient for expression at the apical membrane. Endocytosis is not phosphorylation-dependent. N-glycosylated. As to expression, expressed in renal collecting tubules.

The protein resides in the apical cell membrane. Its subcellular location is the basolateral cell membrane. It is found in the cell membrane. It localises to the cytoplasmic vesicle membrane. The protein localises to the golgi apparatus. The protein resides in the trans-Golgi network membrane. The enzyme catalyses H2O(in) = H2O(out). The catalysed reaction is glycerol(in) = glycerol(out). Its function is as follows. Forms a water-specific channel that provides the plasma membranes of renal collecting duct with high permeability to water, thereby permitting water to move in the direction of an osmotic gradient. Could also be permeable to glycerol. This chain is Aquaporin-2, found in Ovis aries (Sheep).